Reading from the N-terminus, the 33-residue chain is Photosystem II reaction center protein Psb30 (33 aa).

A helical transmembrane segment spans residues 7–27 (IQLGSLTLITLTGPLIIGIIF).

Belongs to the Psb30/Ycf12 family. In terms of assembly, PSII is composed of 1 copy each of membrane proteins PsbA, PsbB, PsbC, PsbD, PsbE, PsbF, PsbH, PsbI, PsbJ, PsbK, PsbL, PsbM, PsbT, PsbY, PsbZ, Psb30/Ycf12, peripheral proteins of the oxygen-evolving complex and a large number of cofactors. It forms dimeric complexes.

The protein localises to the plastid. The protein resides in the chloroplast thylakoid membrane. A core subunit of photosystem II (PSII), probably helps stabilize the reaction center. The protein is Photosystem II reaction center protein Psb30 of Euglena gracilis.